The sequence spans 147 residues: GCCPTFWTSFGSNCYRFFAVSLTWAEGEQFCQSFSVPSRGDIDSIGHLVSIHSETEQNFVYHYFETSTKDDTTPEMWLGFNDRTTEGNFQWTDGSPNDFTAWVGSNPDNYGSGEDCTQMVMGAGLNWIDLPCSSTRHYLICKLPLWE.

The region spanning 1 to 143 is the C-type lectin domain; it reads GCCPTFWTSF…STRHYLICKL (143 aa). Intrachain disulfides connect Cys3–Cys14, Cys31–Cys141, and Cys116–Cys132. The O-linked (Hex) serine glycan is linked to Ser38. Residues 39 to 41 carry the Cell attachment site motif; it reads RGD.

In terms of assembly, homodimer; disulfide-linked. Post-translationally, the identity of the saccharide is not reported in PubMed:3571253, and it is unlikely to be N-acetylgalactosamine. The sugar attached to Ser-38 is represented simply as Hex. In terms of tissue distribution, coelemic fluid.

The protein localises to the secreted. Role in the defense system of the organism against microorganisms. This lectin is specific for Gal-GalNAc. This Heliocidaris crassispina (Sea urchin) protein is Echinoidin.